The primary structure comprises 754 residues: 5-methyltetrahydropteroyltriglutamate--homocysteine methyltransferase (754 aa).

Residues Arg-15–Lys-18 and Lys-114 each bind 5-methyltetrahydropteroyltri-L-glutamate. Residues Ile-430–Ser-432 and Glu-483 contribute to the L-homocysteine site. L-methionine contacts are provided by residues Ile-430–Ser-432 and Glu-483. 5-methyltetrahydropteroyltri-L-glutamate is bound by residues Arg-514–Cys-515 and Trp-560. Asp-598 lines the L-homocysteine pocket. Asp-598 is an L-methionine binding site. Glu-604 serves as a coordination point for 5-methyltetrahydropteroyltri-L-glutamate. The Zn(2+) site is built by His-641, Cys-643, and Glu-665. The Proton donor role is filled by His-694. Cys-726 is a Zn(2+) binding site.

The protein belongs to the vitamin-B12 independent methionine synthase family. The cofactor is Zn(2+).

The catalysed reaction is 5-methyltetrahydropteroyltri-L-glutamate + L-homocysteine = tetrahydropteroyltri-L-glutamate + L-methionine. It functions in the pathway amino-acid biosynthesis; L-methionine biosynthesis via de novo pathway; L-methionine from L-homocysteine (MetE route): step 1/1. Functionally, catalyzes the transfer of a methyl group from 5-methyltetrahydrofolate to homocysteine resulting in methionine formation. The protein is 5-methyltetrahydropteroyltriglutamate--homocysteine methyltransferase of Campylobacter jejuni subsp. jejuni serotype O:23/36 (strain 81-176).